We begin with the raw amino-acid sequence, 112 residues long: Ribonuclease P protein component (112 aa).

The protein belongs to the RnpA family. As to quaternary structure, consists of a catalytic RNA component (M1 or rnpB) and a protein subunit.

It carries out the reaction Endonucleolytic cleavage of RNA, removing 5'-extranucleotides from tRNA precursor.. RNaseP catalyzes the removal of the 5'-leader sequence from pre-tRNA to produce the mature 5'-terminus. It can also cleave other RNA substrates such as 4.5S RNA. The protein component plays an auxiliary but essential role in vivo by binding to the 5'-leader sequence and broadening the substrate specificity of the ribozyme. This Pelotomaculum thermopropionicum (strain DSM 13744 / JCM 10971 / SI) protein is Ribonuclease P protein component.